Consider the following 266-residue polypeptide: Putative transmembrane ascorbate-dependent reductase CYB561 homolog (266 aa).

Topologically, residues 1-22 (MSLLFDPGFVILREDQSVKLFN) are cytoplasmic. A helical transmembrane segment spans residues 23–43 (IILVMSQVFGGLAVLLVTIWM). The region spanning 27–240 (MSQVFGGLAV…YTVCVLLLVL (214 aa)) is the Cytochrome b561 domain. Over 44 to 61 (SKFESGFAWNEDPDKEFN) the chain is Vesicular. Residues 62 to 82 (YHPTFMIMGMVFLFGEALLVY) form a helical membrane-spanning segment. Heme b-binding residues include His-63, Arg-83, and Lys-90. The Cytoplasmic portion of the chain corresponds to 83-95 (RVFRNERKKFSKT). L-ascorbate contacts are provided by Lys-90 and Lys-94. Residues 96–116 (LHVILHSCVLVFMLMALKAVF) traverse the membrane as a helical segment. Heme b-binding positions include His-97, 134 to 137 (NLVS), and His-139. Residues 117-141 (DYHNLHKDPSGNPAPIVNLVSLHSW) lie on the Vesicular side of the membrane. Residues 142-162 (IGLSVVILYFAQYIVGFITYF) traverse the membrane as a helical segment. At 163–176 (FPGMPIPIRQLVMP) the chain is on the cytoplasmic side. Arg-171 lines the L-ascorbate pocket. The chain crosses the membrane as a helical span at residues 177 to 197 (FHQMFGVLIFIFVSITVAMGI). Residues His-178 and Glu-199 each contribute to the heme b site. Over 198–219 (SERAAWKHTCWTKEGQMCAQQA) the chain is Vesicular. Residues 220–240 (TSSFVGVFTFLYTVCVLLLVL) traverse the membrane as a helical segment. The Cytoplasmic segment spans residues 241 to 266 (NPRWKRQSLPEEEGLHHLTSSHSMSD). Lys-245 contributes to the heme b binding site.

The cofactor is heme b.

It is found in the membrane. The enzyme catalyses monodehydro-L-ascorbate radical(out) + L-ascorbate(in) = monodehydro-L-ascorbate radical(in) + L-ascorbate(out). Its function is as follows. Putative transmembrane reductase that uses ascorbate as an electron donor in the cytoplasm and transfers electrons across membranes to reduce monodehydro-L-ascorbate radical in the lumen of secretory vesicles. This is Putative transmembrane ascorbate-dependent reductase CYB561 homolog from Caenorhabditis elegans.